The sequence spans 568 residues: Sulfite reductase [NADPH] hemoprotein beta-component (568 aa).

Residues C425, C431, C470, and C474 each contribute to the [4Fe-4S] cluster site. Position 474 (C474) interacts with siroheme.

This sequence belongs to the nitrite and sulfite reductase 4Fe-4S domain family. Alpha(8)-beta(8). The alpha component is a flavoprotein, the beta component is a hemoprotein. The cofactor is siroheme. It depends on [4Fe-4S] cluster as a cofactor.

It carries out the reaction hydrogen sulfide + 3 NADP(+) + 3 H2O = sulfite + 3 NADPH + 4 H(+). It functions in the pathway sulfur metabolism; hydrogen sulfide biosynthesis; hydrogen sulfide from sulfite (NADPH route): step 1/1. Its function is as follows. Component of the sulfite reductase complex that catalyzes the 6-electron reduction of sulfite to sulfide. This is one of several activities required for the biosynthesis of L-cysteine from sulfate. The polypeptide is Sulfite reductase [NADPH] hemoprotein beta-component (Xanthomonas campestris pv. campestris (strain ATCC 33913 / DSM 3586 / NCPPB 528 / LMG 568 / P 25)).